The chain runs to 217 residues: Elongation factor Ts (217 aa).

The interval 82–85 is involved in Mg(2+) ion dislocation from EF-Tu; the sequence is TDFV.

This sequence belongs to the EF-Ts family.

It localises to the cytoplasm. In terms of biological role, associates with the EF-Tu.GDP complex and induces the exchange of GDP to GTP. It remains bound to the aminoacyl-tRNA.EF-Tu.GTP complex up to the GTP hydrolysis stage on the ribosome. This chain is Elongation factor Ts, found in Prochlorococcus marinus (strain SARG / CCMP1375 / SS120).